The following is a 548-amino-acid chain: Probable malate:quinone oxidoreductase (548 aa).

The tract at residues 521 to 548 is disordered; that stretch reads DKPQAADSTPKPQLKPQPVQKEVADIAL. The span at 530–541 shows a compositional bias: low complexity; it reads PKPQLKPQPVQK.

This sequence belongs to the MQO family. The cofactor is FAD.

The catalysed reaction is (S)-malate + a quinone = a quinol + oxaloacetate. It functions in the pathway carbohydrate metabolism; tricarboxylic acid cycle; oxaloacetate from (S)-malate (quinone route): step 1/1. The protein is Probable malate:quinone oxidoreductase of Escherichia coli O17:K52:H18 (strain UMN026 / ExPEC).